The primary structure comprises 170 residues: Chorion protein S18 (170 aa).

The N-terminal stretch at 1 to 17 (MMKFMCIFVCAIAAVSA) is a signal peptide. A compositionally biased stretch (low complexity) spans 146–159 (AAAASSSVAGQHSG). The tract at residues 146–170 (AAAASSSVAGQHSGYKNSGYKNSSY) is disordered. The segment covering 160 to 170 (YKNSGYKNSSY) has biased composition (polar residues).

This sequence belongs to the chorion protein S15/S18 family.

Its subcellular location is the secreted. Functionally, chorion membrane (egg shell) protein; plays a role in protecting the egg from the environment. The protein is Chorion protein S18 (Cp18) of Drosophila virilis (Fruit fly).